Consider the following 1594-residue polypeptide: NAD-specific glutamate dehydrogenase (1594 aa).

Residue K816 is part of the active site.

It belongs to the Glu/Leu/Phe/Val dehydrogenases family. As to quaternary structure, interacts with (unphosphorylated) GarA.

It catalyses the reaction L-glutamate + NAD(+) + H2O = 2-oxoglutarate + NH4(+) + NADH + H(+). Activity is inhibited by unphosphorylated GarA. Stimulated by manganese and magnesium. In terms of biological role, catalyzes the reversible conversion of L-glutamate to 2-oxoglutarate. Highly specific for NAD. The polypeptide is NAD-specific glutamate dehydrogenase (gdh) (Mycolicibacterium smegmatis (strain ATCC 700084 / mc(2)155) (Mycobacterium smegmatis)).